Consider the following 398-residue polypeptide: 2-amino-3-ketobutyrate coenzyme A ligase (398 aa).

A pyridoxal 5'-phosphate-binding site is contributed by 111-112 (CF). Residue H136 participates in substrate binding. Pyridoxal 5'-phosphate is bound by residues S185, 210–213 (DDSH), 241–244 (TLGK), and 274–275 (SN). At K244 the chain carries N6-(pyridoxal phosphate)lysine. A substrate-binding site is contributed by R368.

Belongs to the class-II pyridoxal-phosphate-dependent aminotransferase family. As to quaternary structure, homodimer. Requires pyridoxal 5'-phosphate as cofactor.

The catalysed reaction is glycine + acetyl-CoA = (2S)-2-amino-3-oxobutanoate + CoA. It participates in amino-acid degradation; L-threonine degradation via oxydo-reductase pathway; glycine from L-threonine: step 2/2. Its function is as follows. Catalyzes the cleavage of 2-amino-3-ketobutyrate to glycine and acetyl-CoA. The polypeptide is 2-amino-3-ketobutyrate coenzyme A ligase (Salmonella typhimurium (strain LT2 / SGSC1412 / ATCC 700720)).